The primary structure comprises 317 residues: Aspartate carbamoyltransferase catalytic subunit (317 aa).

Residues arginine 66 and threonine 67 each coordinate carbamoyl phosphate. Residue lysine 94 participates in L-aspartate binding. 3 residues coordinate carbamoyl phosphate: arginine 116, histidine 144, and glutamine 147. 2 residues coordinate L-aspartate: arginine 177 and arginine 231. Carbamoyl phosphate contacts are provided by glycine 272 and proline 273.

The protein belongs to the aspartate/ornithine carbamoyltransferase superfamily. ATCase family. Heterododecamer (2C3:3R2) of six catalytic PyrB chains organized as two trimers (C3), and six regulatory PyrI chains organized as three dimers (R2).

It catalyses the reaction carbamoyl phosphate + L-aspartate = N-carbamoyl-L-aspartate + phosphate + H(+). It participates in pyrimidine metabolism; UMP biosynthesis via de novo pathway; (S)-dihydroorotate from bicarbonate: step 2/3. Functionally, catalyzes the condensation of carbamoyl phosphate and aspartate to form carbamoyl aspartate and inorganic phosphate, the committed step in the de novo pyrimidine nucleotide biosynthesis pathway. The chain is Aspartate carbamoyltransferase catalytic subunit from Beijerinckia indica subsp. indica (strain ATCC 9039 / DSM 1715 / NCIMB 8712).